The primary structure comprises 293 residues: MRVLVGGGTGFIGTAVTQLLRGRGHEVKLVSRQPGPGRITWSELSESGLPLCDVVINLAGENILNPLRRWNETFQKEVLTSRLDTTHLLAKAITETAHPPQAWILVTGVAYYQPSLTKEYDEDSPGGNFDFFSNLVTKWEAAARLPGESTRQVVVRSGVVLGRGGGAISHMLLPFRLGLGGPIGSGRQFFPWIHIGDLAGILNYALEANHVQGVLNGVAPASTTTNAEFAQALGAALGRPAFIPVPSTVVRAVFGERAIMLLEGQKVVPRRTLATGYQYSFPELRAALKDVVA.

NADP(+) is bound by residues 31–32 (SR), 58–59 (LA), Glu-77, Arg-82, and Val-160.

This sequence belongs to the NAD(P)-dependent epimerase/dehydratase family. SDR39U1 subfamily.

In terms of biological role, putative NADP-dependent oxidoreductase. The protein is Epimerase family protein SDR39U1 (Sdr39u1) of Mus musculus (Mouse).